Here is a 1072-residue protein sequence, read N- to C-terminus: DNA-directed RNA polymerase subunit beta (1072 aa).

It belongs to the RNA polymerase beta chain family. In terms of assembly, in plastids the minimal PEP RNA polymerase catalytic core is composed of four subunits: alpha, beta, beta', and beta''. When a (nuclear-encoded) sigma factor is associated with the core the holoenzyme is formed, which can initiate transcription.

It is found in the plastid. The protein resides in the chloroplast. The catalysed reaction is RNA(n) + a ribonucleoside 5'-triphosphate = RNA(n+1) + diphosphate. Functionally, DNA-dependent RNA polymerase catalyzes the transcription of DNA into RNA using the four ribonucleoside triphosphates as substrates. The sequence is that of DNA-directed RNA polymerase subunit beta from Amborella trichopoda.